Reading from the N-terminus, the 631-residue chain is Phosphomethylpyrimidine synthase (631 aa).

The disordered stretch occupies residues 54 to 80; it reads TLVGGDKDKPRYETNEPIPVYDTSGPY. Basic and acidic residues predominate over residues 58–67; sequence GDKDKPRYET. Residues Asn239, Met268, Tyr297, His333, 353-355, 394-397, and Glu433 contribute to the substrate site; these read SRG and DGLR. A Zn(2+)-binding site is contributed by His437. Substrate is bound at residue Tyr460. His501 serves as a coordination point for Zn(2+). 3 residues coordinate [4Fe-4S] cluster: Cys581, Cys584, and Cys589.

The protein belongs to the ThiC family. As to quaternary structure, homodimer. [4Fe-4S] cluster is required as a cofactor.

It catalyses the reaction 5-amino-1-(5-phospho-beta-D-ribosyl)imidazole + S-adenosyl-L-methionine = 4-amino-2-methyl-5-(phosphooxymethyl)pyrimidine + CO + 5'-deoxyadenosine + formate + L-methionine + 3 H(+). It functions in the pathway cofactor biosynthesis; thiamine diphosphate biosynthesis. Catalyzes the synthesis of the hydroxymethylpyrimidine phosphate (HMP-P) moiety of thiamine from aminoimidazole ribotide (AIR) in a radical S-adenosyl-L-methionine (SAM)-dependent reaction. The polypeptide is Phosphomethylpyrimidine synthase (Klebsiella pneumoniae subsp. pneumoniae (strain ATCC 700721 / MGH 78578)).